The primary structure comprises 883 residues: MEKLSANKIRQLWIDFFRERNHFFIESKPLVPQNDDSLLWINSGVATLKDYFTGKKIPPSKRLVNSQKALRTNDIENVGLTSRHHTLFEMLGNFSIGDYFKTEAIDYAYEFLTKKLKLDPKNLFITYYDGDDITFEKWKSLGFSNEKLIKGSRKTNFWDLGQGPCGPCSEIYFDRGPKFDSRGSELIKNEIENDRFIEIWNIVFSEFNNDGQQNYTPLKSKNIDTGAGFERIVSILQDGPTNYDTDLFLPIIAEIEKNTVFRYKIENYFLKEPRQTQINKSFRIIADHIRAITLAINDGVQPSNLHRGYIIRRLIRRAYWNGKELGISHPFLYKLVEIVGKTLDYRFDIPTISKIILNEEENFAKTLEIGYNLLESQLKINKNQIKPVTVFKLFETYGFPVELTKEILAEKNIDFDLSQLVEFQEKHSQISRAKKTTGMQKVINSLTQIKAKISDFIGYHTHHIETKISFLANKDEEVAETNGENLSYVIFEKTPFYATAGGQKHDQGWIIQNNSTIEILDVFKDKFLNNIHVFKGKIVKNQPVFLKLDTKNRLNLERNHSGTHLLFASLRQEFGSEIKQLGSDNNEDRLTFDFPLNRKPSDQEIKSVENRINSYINQKIKRKYLVTNLEEAQKLNAIMTLEESEYMDPNSLRLVIFDKITTDLCGGTHIENTELLEKFTILSCQSKGSGIYRIRAVTSWNKYFEFLKGKIQEILSKISALKNKIKKIEPNFGLNLPNLVDLEQQFDYLKKIEDDLRIYYKKLLKSQLRIAKSELDANKIIEIGKFSFYLDFNLPLHNLKQIAATWREQNPRISFILGANLVNNEFLIIVSSAILASNQILEKIFEIFTGSGGGNYKIAQGKIQKKPEKEVFIKLLWENITEF.

Zn(2+) is bound by residues histidine 560, histidine 564, cysteine 665, and histidine 669.

It belongs to the class-II aminoacyl-tRNA synthetase family. Zn(2+) serves as cofactor.

It is found in the cytoplasm. The catalysed reaction is tRNA(Ala) + L-alanine + ATP = L-alanyl-tRNA(Ala) + AMP + diphosphate. Catalyzes the attachment of alanine to tRNA(Ala) in a two-step reaction: alanine is first activated by ATP to form Ala-AMP and then transferred to the acceptor end of tRNA(Ala). Also edits incorrectly charged Ser-tRNA(Ala) and Gly-tRNA(Ala) via its editing domain. In Mesomycoplasma hyopneumoniae (strain J / ATCC 25934 / NCTC 10110) (Mycoplasma hyopneumoniae), this protein is Alanine--tRNA ligase.